Reading from the N-terminus, the 284-residue chain is L-ribulose-5-phosphate 3-epimerase UlaE (284 aa).

Belongs to the L-ribulose-5-phosphate 3-epimerase family.

It catalyses the reaction L-ribulose 5-phosphate = L-xylulose 5-phosphate. It functions in the pathway cofactor degradation; L-ascorbate degradation; D-xylulose 5-phosphate from L-ascorbate: step 3/4. In terms of biological role, catalyzes the isomerization of L-xylulose-5-phosphate to L-ribulose-5-phosphate. Is involved in the anaerobic L-ascorbate utilization. The sequence is that of L-ribulose-5-phosphate 3-epimerase UlaE from Escherichia coli O127:H6 (strain E2348/69 / EPEC).